Reading from the N-terminus, the 490-residue chain is Betaine aldehyde dehydrogenase (490 aa).

Thr-26, Ile-27, and Asp-93 together coordinate K(+). Residue 150–152 coordinates NAD(+); the sequence is GAW. Residue Lys-162 is the Charge relay system of the active site. 176 to 179 is an NAD(+) binding site; sequence KPSE. Val-180 lines the K(+) pocket. 230-233 contacts NAD(+); that stretch reads GVAS. Residue Leu-246 coordinates K(+). Glu-252 acts as the Proton acceptor in catalysis. Residues Gly-254, Cys-286, and Glu-387 each contribute to the NAD(+) site. Cys-286 (nucleophile) is an active-site residue. The residue at position 286 (Cys-286) is a Cysteine sulfenic acid (-SOH). Residues Lys-457 and Gly-460 each contribute to the K(+) site. Glu-464 serves as the catalytic Charge relay system.

The protein belongs to the aldehyde dehydrogenase family. As to quaternary structure, dimer of dimers. K(+) serves as cofactor.

It carries out the reaction betaine aldehyde + NAD(+) + H2O = glycine betaine + NADH + 2 H(+). Its pathway is amine and polyamine biosynthesis; betaine biosynthesis via choline pathway; betaine from betaine aldehyde: step 1/1. In terms of biological role, involved in the biosynthesis of the osmoprotectant glycine betaine. Catalyzes the irreversible oxidation of betaine aldehyde to the corresponding acid. This chain is Betaine aldehyde dehydrogenase, found in Escherichia coli O6:K15:H31 (strain 536 / UPEC).